The following is a 94-amino-acid chain: MSESNVTETNEQRGFRKTREGLVVSDKMDKTVVVAVEDRVKHALYGKVIRRTNKLKAHDEQNAAGVGDRVLLMETRPLSATKRWRVVEILEKAK.

Belongs to the universal ribosomal protein uS17 family. Part of the 30S ribosomal subunit.

Its function is as follows. One of the primary rRNA binding proteins, it binds specifically to the 5'-end of 16S ribosomal RNA. This is Small ribosomal subunit protein uS17 from Streptomyces avermitilis (strain ATCC 31267 / DSM 46492 / JCM 5070 / NBRC 14893 / NCIMB 12804 / NRRL 8165 / MA-4680).